The chain runs to 392 residues: Keratin, type I cuticular Ha4 (392 aa).

The interval 1–56 (MSCESCLPALSCRTSCSSRPCVPPSCHGCTLPGACNIPANVGNCNWFCEGSFNGNE) is head. The IF rod domain occupies 56–367 (EKETMQFLND…SLLESEDCNL (312 aa)). Positions 57-91 (KETMQFLNDRLASYMEKVRQLERENAELECRIQER) are coil 1A. The linker 1 stretch occupies residues 92-102 (NQQQDPLVCPA). Positions 103-203 (YQAYFRTIEE…HEEEVNTLRC (101 aa)) are coil 1B. A linker 12 region spans residues 204–219 (QLGDRLNVEVDAAPTV). The tract at residues 220 to 363 (DLNRVLNETR…NTYRSLLESE (144 aa)) is coil 2. Residues 364–392 (DCNLPCNPCATTNASGSCCGPCGSSKRCC) form a tail region.

Belongs to the intermediate filament family. Expressed in the hair root in the hair shaft cuticle and cortex.

This is Keratin, type I cuticular Ha4 from Mus musculus (Mouse).